We begin with the raw amino-acid sequence, 558 residues long: MEPADLLPLYLQPEWGEQEPGGATPFVEILEQPKQRGMRFRYKCEGRSAGSIPGEHSTDSARTHPTIRVNHYRGPGRVRVSLVTKDPPHGPHPHELVGRHCQHGYYEAELSPERCVHSFQNLGIQCVKKRELEAAVAERIRTNNNPFNVPMEERGAEYDLSAVRLCFQVWVNGPGGLCPLPPVLSQPIYDNRAPSTAELRILPGDRNSGSCQGGDEIFLLCDKVQKEDIEVRFWAEGWEAKGSFAAADVHRQVAIVFRTPPFRERSLRHPVTVRMELQRPSDRQRSPPLDFRYLPHQGDLQCIEEKRKRTRDTFRAFVQRAPLPGLEPNPEPRPPRRIAVPSRPPPAPQQPPSMVGAPPAPLFPLGVPPASSPTPEPLAEALLQLQFDDGVGGSGPPPSTTTTTTTTQCALGGGIPDPGGSPLDLGALLGDPPFDTIDAAELQRLLGPPETPPGGIGAGGGFGELLSLPTNFGDPPSSTAATFGPSPPMLLSYPEAITRLVQCQTPGGSGGGGPPVGPPQDLGGPLHPPGAPPQPTEDSLPSLGDLDFSAFLSQFPSS.

Residues 25–311 enclose the RHD domain; the sequence is PFVEILEQPK…CIEEKRKRTR (287 aa). Position 281 is a phosphoserine; by PKA (Ser-281). The Nuclear localization signal motif lies at 306–309; sequence KRKR. Disordered regions lie at residues 317–376 and 388–544; these read FVQR…PTPE and DDGV…PSLG. 2 stretches are compositionally biased toward pro residues: residues 342 to 351 and 358 to 376; these read SRPPPAPQQP and PPAPLFPLGVPPASSPTPE. The transcriptional activation domain 1 stretch occupies residues 385–444; sequence LQFDDGVGGSGPPPSTTTTTTTTQCALGGGIPDPGGSPLDLGALLGDPPFDTIDAAELQR. Residues 418-433 show a composition bias toward low complexity; sequence PGGSPLDLGALLGDPP. Gly residues predominate over residues 454-463; that stretch reads GGIGAGGGFG. The segment at 524–558 is transcriptional activation domain 2; sequence GPLHPPGAPPQPTEDSLPSLGDLDFSAFLSQFPSS. Residues 526–535 show a composition bias toward pro residues; the sequence is LHPPGAPPQP. The short motif at 542 to 558 is the 9aaTAD element; that stretch reads SLGDLDFSAFLSQFPSS.

As to quaternary structure, component of the NF-kappa-B p65-p50 complex. Component of the NF-kappa-B p65-c-Rel complex. Component of the NF-kappa-B p65-p105 complex. As to expression, spleen; lower level in brain.

The protein localises to the nucleus. Its subcellular location is the cytoplasm. Functionally, NF-kappa-B is a pleiotropic transcription factor present in almost all cell types and is the endpoint of a series of signal transduction events that are initiated by a vast array of stimuli related to many biological processes such as inflammation, immunity, differentiation, cell growth, tumorigenesis and apoptosis. NF-kappa-B is a homo- or heterodimeric complex formed by the Rel-like domain-containing proteins. The dimers bind at kappa-B sites in the DNA of their target genes and the individual dimers have distinct preferences for different kappa-B sites that they can bind with distinguishable affinity and specificity. Different dimer combinations act as transcriptional activators or repressors, respectively. NF-kappa-B is controlled by various mechanisms of post-translational modification and subcellular compartmentalization as well as by interactions with other cofactors or corepressors. NF-kappa-B complexes are held in the cytoplasm in an inactive state complexed with members of the NF-kappa-B inhibitor (I-kappa-B) family. In a conventional activation pathway, I-kappa-B is phosphorylated by I-kappa-B kinases (IKKs) in response to different activators, subsequently degraded thus liberating the active NF-kappa-B complex which translocates to the nucleus. RELA shows a weak DNA-binding site which could contribute directly to DNA binding in the NF-kappa-B complex. The protein is Transcription factor p65 (RELA) of Gallus gallus (Chicken).